The primary structure comprises 1755 residues: E3 ubiquitin-protein ligase UBR2 (1755 aa).

The residue at position 2 (alanine 2) is an N-acetylalanine. Lysine 94 is covalently cross-linked (Glycyl lysine isopeptide (Lys-Gly) (interchain with G-Cter in ubiquitin)). The UBR-type zinc-finger motif lies at 97-168 (HLCGRVFKVG…EGPYCQKHKL (72 aa)). Cysteine 99, cysteine 112, cysteine 115, cysteine 124, cysteine 127, histidine 133, and histidine 136 together coordinate Zn(2+). Phenylalanine 148 contacts a peptide. Residue cysteine 149 coordinates Zn(2+). Aspartate 150 serves as a coordination point for a peptide. Cysteine 151 is a Zn(2+) binding site. Position 153 (aspartate 153) interacts with a peptide. Lysine 158 participates in a covalent cross-link: Glycyl lysine isopeptide (Lys-Gly) (interchain with G-Cter in ubiquitin). Cysteine 163 contacts Zn(2+). Lysine 165 participates in a covalent cross-link: Glycyl lysine isopeptide (Lys-Gly) (interchain with G-Cter in ubiquitin). Position 166 (histidine 166) interacts with Zn(2+). Glycyl lysine isopeptide (Lys-Gly) (interchain with G-Cter in ubiquitin) cross-links involve residues lysine 248, lysine 255, and lysine 470. The residue at position 476 (serine 476) is a Phosphoserine. Residues lysine 488, lysine 568, lysine 779, and lysine 789 each participate in a glycyl lysine isopeptide (Lys-Gly) (interchain with G-Cter in ubiquitin) cross-link. A disordered region spans residues 1012 to 1033 (AEAEGTIMEESSRDKDKAERKR). The stretch at 1019-1054 (MEESSRDKDKAERKRKAEIARLRREKIMAQMSEMQR) forms a coiled coil. A compositionally biased stretch (basic and acidic residues) spans 1021–1033 (ESSRDKDKAERKR). Cysteine 1108, cysteine 1111, cysteine 1168, histidine 1170, histidine 1173, cysteine 1176, cysteine 1210, and cysteine 1213 together coordinate Zn(2+). Residues 1108–1214 (CILCQEEQEV…NGEFLCPLCE (107 aa)) form an RING-type; atypical zinc finger. Glycyl lysine isopeptide (Lys-Gly) (interchain with G-Cter in ubiquitin) cross-links involve residues lysine 1496, lysine 1599, and lysine 1689. Position 1694 is a phosphoserine (serine 1694). Tyrosine 1697 is modified (phosphotyrosine).

Belongs to the E3 ubiquitin-protein ligase UBR1-like family. Interacts with UBE2B; promotes the UBE2B-H2A interaction and the ubiquitination of histone H2A by UBE2B and UBR2. Interacts with RECQL4. Interacts with Tex19.1 and Tex19.2; does not lead to Tex19.1 degradation and stabilizes it. Interacts with L1RE1. Interacts with CASP8. Interacts with ATXN3. Interacts with UBE2O. Dephosphorylated by DUSP22 at Ser-1694 and Tyr-1697, leading to subsequent ubiquitination and proteasomal degradation. In terms of processing, 'Lys-48'-linked ubiquitinated at Lys-94, Lys-779 and Lys-1599 following DUSP22-mediated dephosphorylation of Ser-1694 and Tyr-1697 which promotes UBR2 interaction with the SCF(FBW1A) E3 ubiquitin-protein ligase complex. Highly expressed in skeletal muscle. Also expressed in heart, kidney and testis. Expressed in acinar cells of the pancreas. In testes, expressed primarily in spermatocytes. Expressed in cerebellum.

The protein localises to the nucleus. It is found in the chromosome. The enzyme catalyses S-ubiquitinyl-[E2 ubiquitin-conjugating enzyme]-L-cysteine + [acceptor protein]-L-lysine = [E2 ubiquitin-conjugating enzyme]-L-cysteine + N(6)-ubiquitinyl-[acceptor protein]-L-lysine.. Its pathway is protein modification; protein ubiquitination. E3 ubiquitin-protein ligase which is a component of the N-end rule pathway. Recognizes and binds to proteins bearing specific N-terminal residues (N-degrons) that are destabilizing according to the N-end rule, leading to their ubiquitination and subsequent degradation. Recognizes both type-1 and type-2 N-degrons, containing positively charged amino acids (Arg, Lys and His) and bulky and hydrophobic amino acids, respectively. Does not ubiquitinate proteins that are acetylated at the N-terminus. In contrast, it strongly binds methylated N-degrons. Plays a critical role in chromatin inactivation and chromosome-wide transcriptional silencing during meiosis via ubiquitination of histone H2A. Binds leucine and is a negative regulator of the leucine-mTOR signaling pathway, thereby controlling cell growth. Required for spermatogenesis, promotes, with Tex19.1, SPO11-dependent recombination foci to accumulate and drive robust homologous chromosome synapsis. Polyubiquitinates LINE-1 retrotransposon encoded, LIRE1, which induces degradation, inhibiting LINE-1 retrotransposon mobilization. Catalyzes ubiquitination and degradation of the N-terminal part of NLRP1B following NLRP1B activation by pathogens and other damage-associated signals: ubiquitination promotes degradation of the N-terminal part and subsequent release of the cleaved C-terminal part of NLRP1B, which polymerizes and forms the NLRP1B inflammasome followed by host cell pyroptosis. Plays a role in T-cell receptor signaling by inducing 'Lys-63'-linked ubiquitination of lymphocyte cell-specific kinase LCK. This activity is regulated by DUSP22, which induces 'Lys-48'-linked ubiquitination of UBR2, leading to its proteasomal degradation by SCF E3 ubiquitin-protein ligase complex. The protein is E3 ubiquitin-protein ligase UBR2 of Mus musculus (Mouse).